The sequence spans 337 residues: MNEPLDYLANASDFPDYAAAFGNCTDENIPLKMHYLPVIYGIIFLVGFPGNAVVISTYIFKMRPWKSSTIIMLNLACTDLLYLTSLPFLIHYYASGENWIFGDFMCKFIRFSFHFNLYSSILFLTCFSIFRYCVIIHPMSCFSIHKTRCAVVACAVVWIISLVAVIPMTFLITSTNRTNRSACLDLTSSDELNTIKWYNLILTATTFCLPLVIVTLCYTTIIHTLTHGLQTDSCLKQKARRLTILLLLAFYVCFLPFHILRVIRIESRLLSISCSIENQIHEAYIVSRPLAALNTFGNLLLYVVVSDNFQQAVCSTVRCKVSGNLEQAKKISYSNNP.

Residues 1 to 34 (MNEPLDYLANASDFPDYAAAFGNCTDENIPLKMH) lie on the Extracellular side of the membrane. Asparagine 10 and asparagine 23 each carry an N-linked (GlcNAc...) asparagine glycan. Residues 35–55 (YLPVIYGIIFLVGFPGNAVVI) traverse the membrane as a helical segment. The Cytoplasmic portion of the chain corresponds to 56–69 (STYIFKMRPWKSST). Residues 70-90 (IIMLNLACTDLLYLTSLPFLI) traverse the membrane as a helical segment. Over 91–116 (HYYASGENWIFGDFMCKFIRFSFHFN) the chain is Extracellular. An intrachain disulfide couples cysteine 106 to cysteine 183. The chain crosses the membrane as a helical span at residues 117-137 (LYSSILFLTCFSIFRYCVIIH). Over 138–151 (PMSCFSIHKTRCAV) the chain is Cytoplasmic. Residues 152–172 (VACAVVWIISLVAVIPMTFLI) form a helical membrane-spanning segment. The Extracellular segment spans residues 173–201 (TSTNRTNRSACLDLTSSDELNTIKWYNLI). N-linked (GlcNAc...) asparagine glycosylation is found at asparagine 176 and asparagine 179. Residues 202-222 (LTATTFCLPLVIVTLCYTTII) traverse the membrane as a helical segment. Over 223 to 242 (HTLTHGLQTDSCLKQKARRL) the chain is Cytoplasmic. A helical membrane pass occupies residues 243 to 263 (TILLLLAFYVCFLPFHILRVI). The Extracellular portion of the chain corresponds to 264–284 (RIESRLLSISCSIENQIHEAY). The chain crosses the membrane as a helical span at residues 285–305 (IVSRPLAALNTFGNLLLYVVV). Residues 306 to 337 (SDNFQQAVCSTVRCKVSGNLEQAKKISYSNNP) are Cytoplasmic-facing.

The protein belongs to the G-protein coupled receptor 1 family. In terms of tissue distribution, detected in kidney and, to a lower extent, in placenta. Not detected in brain tissues including the frontal cortex, caudate putamen, thalamus, hypothalamus, hippocampus or pons.

It localises to the cell membrane. In terms of biological role, g protein-coupled receptor for dicarboxylates and amino dicarboxylates. Receptor for itaconate, a metabolite produced by myeloid lineages. In the respiratory epithelium, couples the binding of itaconate to the activation of GNA11 and downstream intracellular Ca(2+) release, leading to mucocilliary clearance of airborne pathogens. Receptor for leukotriene E4 (LTE4) produced by mast cells upon allergic inflammation. Binds with high affinity to LTE4 and elicits mucin release from pulmonary epithelium in response to airborne fungi allergens. Regulates mucin-producing goblet cell homeostasis. Receptor for alpha-ketoglutarate produced by proximal tubule renal cells upon metabolic alkalosis. In an intrarenal paracrine signaling pathway, binds alpha-ketoglutarate and drives transepithelial salt reabsorption and bicarbonate secretion by SLC26A4/pendrin-positive intercalated cells. In Homo sapiens (Human), this protein is 2-oxoglutarate receptor 1 (OXGR1).